The chain runs to 431 residues: Polygalacturonase ADPG1 (431 aa).

Positions 1 to 23 (MARCCRHLAVFLCVLLMLSLCKA) are cleaved as a signal peptide. PbH1 repeat units lie at residues 223–249 (CNKV…HITN) and 250–271 (TQNI…SIED). Aspartate 264 functions as the Proton donor in the catalytic mechanism. Histidine 287 is an active-site residue. PbH1 repeat units lie at residues 303-324 (VSGI…RIKT), 332-353 (AKNI…IIDQ), and 398-420 (CQGI…NANV).

This sequence belongs to the glycosyl hydrolase 28 family. Expressed in flower buds and siliques, in the dehiscence zone of anthers (stomium cells) and maturing siliques. Expressed in stigma during pollen tube growth. Not expressed in seeds or in the floral part or leaf abscission zone but found at the junction between the seed and the funiculus at the site of seed abscission.

It localises to the secreted. The protein localises to the cell wall. The protein resides in the cytoplasm. It carries out the reaction (1,4-alpha-D-galacturonosyl)n+m + H2O = (1,4-alpha-D-galacturonosyl)n + (1,4-alpha-D-galacturonosyl)m.. Functionally, polygalacturonase involved in cell separation in the final stages of pod shatter and in anther dehiscence. Not involved in floral organ abscission. This chain is Polygalacturonase ADPG1 (ADPG1), found in Arabidopsis thaliana (Mouse-ear cress).